We begin with the raw amino-acid sequence, 459 residues long: Phosphoglucosamine mutase (459 aa).

The Phosphoserine intermediate role is filled by serine 105. The Mg(2+) site is built by serine 105, aspartate 252, aspartate 254, and aspartate 256. A Phosphoserine modification is found at serine 105.

Belongs to the phosphohexose mutase family. Requires Mg(2+) as cofactor. In terms of processing, activated by phosphorylation.

The catalysed reaction is alpha-D-glucosamine 1-phosphate = D-glucosamine 6-phosphate. In terms of biological role, catalyzes the conversion of glucosamine-6-phosphate to glucosamine-1-phosphate. The protein is Phosphoglucosamine mutase of Bifidobacterium adolescentis (strain ATCC 15703 / DSM 20083 / NCTC 11814 / E194a).